Reading from the N-terminus, the 296-residue chain is uncharacterized protein (296 aa).

A signal peptide spans 1–20; it reads MKKLLLIIITVFFAFNVAQA.

This is an uncharacterized protein from Rickettsia felis (strain ATCC VR-1525 / URRWXCal2) (Rickettsia azadi).